Consider the following 305-residue polypeptide: Homoserine O-acetyltransferase (305 aa).

Catalysis depends on C132, which acts as the Acyl-thioester intermediate. Substrate is bound by residues K153 and S181. Residue H221 is the Proton acceptor of the active site. Residue E223 is part of the active site. R235 provides a ligand contact to substrate.

This sequence belongs to the MetA family.

Its subcellular location is the cytoplasm. The catalysed reaction is L-homoserine + acetyl-CoA = O-acetyl-L-homoserine + CoA. It participates in amino-acid biosynthesis; L-methionine biosynthesis via de novo pathway; O-acetyl-L-homoserine from L-homoserine: step 1/1. Functionally, transfers an acetyl group from acetyl-CoA to L-homoserine, forming acetyl-L-homoserine. This Leuconostoc mesenteroides subsp. mesenteroides (strain ATCC 8293 / DSM 20343 / BCRC 11652 / CCM 1803 / JCM 6124 / NCDO 523 / NBRC 100496 / NCIMB 8023 / NCTC 12954 / NRRL B-1118 / 37Y) protein is Homoserine O-acetyltransferase.